Here is a 287-residue protein sequence, read N- to C-terminus: Prepilin leader peptidase/N-methyltransferase (287 aa).

6 helical membrane passes run 10–30 (LGFP…NVVI), 101–121 (ISIQ…ASVW), 125–145 (FGWQ…MSGI), 177–197 (KPAL…WWLF), 226–246 (ILPI…IWLF), and 253–273 (ATPI…FFWG).

It belongs to the peptidase A24 family.

It localises to the cell inner membrane. It carries out the reaction Typically cleaves a -Gly-|-Phe- bond to release an N-terminal, basic peptide of 5-8 residues from type IV prepilin, and then N-methylates the new N-terminal amino group, the methyl donor being S-adenosyl-L-methionine.. Plays an essential role in type IV pili and type II pseudopili formation by proteolytically removing the leader sequence from substrate proteins and subsequently monomethylating the alpha-amino group of the newly exposed N-terminal phenylalanine. The sequence is that of Prepilin leader peptidase/N-methyltransferase (xpsO) from Xanthomonas campestris pv. campestris (strain ATCC 33913 / DSM 3586 / NCPPB 528 / LMG 568 / P 25).